The primary structure comprises 359 residues: MSQPNSILMSYGWDPSIYLEEPKLLEGLKPGRVLAVYGEYSKIIIEQGEKKGIFSGALMASGESIVTGDWVLIREIEGDELCIVEKILPRKTFLRRSNPGKRKGSQAIASNIDLLLVIMGLDNDYSPRRIERYLFLAKVSGAQVTIVLNKKDLCMDPENKFMEIKTIAGETPIEMISALDLKQTRTILQWIDPGKTITFLGSSGAGKSTIINSLLGGEIQKTNEVKVSDGTGKHTTTRRELFLLPSGGVLMDNPGIREVGLFSEGSEDELEEVFPEIAVAAEECRFNDCSHNEEPNCGVVAAVKDGRISEARYFSYLKLSKELMAYQALNDPEEARKKKQKDKQMSKALQKRLKDKGRK.

The region spanning 101–259 (KRKGSQAIAS…LMDNPGIREV (159 aa)) is the CP-type G domain. GTP contacts are provided by residues 149-152 (NKKD) and 201-209 (GSSGAGKST). C284, C289, H291, and C297 together coordinate Zn(2+). Positions 331 to 359 (DPEEARKKKQKDKQMSKALQKRLKDKGRK) are disordered. The segment covering 349–359 (LQKRLKDKGRK) has biased composition (basic residues).

The protein belongs to the TRAFAC class YlqF/YawG GTPase family. RsgA subfamily. In terms of assembly, monomer. Associates with 30S ribosomal subunit, binds 16S rRNA. Requires Zn(2+) as cofactor.

The protein resides in the cytoplasm. One of several proteins that assist in the late maturation steps of the functional core of the 30S ribosomal subunit. Helps release RbfA from mature subunits. May play a role in the assembly of ribosomal proteins into the subunit. Circularly permuted GTPase that catalyzes slow GTP hydrolysis, GTPase activity is stimulated by the 30S ribosomal subunit. This chain is Small ribosomal subunit biogenesis GTPase RsgA, found in Leptospira interrogans serogroup Icterohaemorrhagiae serovar Lai (strain 56601).